A 192-amino-acid chain; its full sequence is Adenylate kinase (192 aa).

12-17 (GSGKTT) provides a ligand contact to ATP. Positions 34-63 (STGDLLRAEVASGSELGKTIDSFISKGNLV) are NMP. AMP-binding positions include threonine 35, arginine 40, 61-63 (NLV), 88-91 (GYPR), and glutamine 95. Residues 130 to 136 (GRNRGTD) form an LID region. Arginine 131 contacts ATP. Arginine 133 and arginine 145 together coordinate AMP. Residue arginine 173 coordinates ATP.

It belongs to the adenylate kinase family. In terms of assembly, monomer.

The protein localises to the cytoplasm. The catalysed reaction is AMP + ATP = 2 ADP. Its pathway is purine metabolism; AMP biosynthesis via salvage pathway; AMP from ADP: step 1/1. Functionally, catalyzes the reversible transfer of the terminal phosphate group between ATP and AMP. Plays an important role in cellular energy homeostasis and in adenine nucleotide metabolism. This is Adenylate kinase from Campylobacter jejuni (strain RM1221).